We begin with the raw amino-acid sequence, 914 residues long: Penicillin-binding protein 1A/1B (914 aa).

Positions 1-29 (MSDQFNSREARRKANSKSSPSPKKGKKRK) are disordered. Residues 1–37 (MSDQFNSREARRKANSKSSPSPKKGKKRKKGGLFKKT) lie on the Cytoplasmic side of the membrane. A helical; Signal-anchor for type II membrane protein membrane pass occupies residues 38-58 (LFTLLILFVLGVVGGAVTFAV). Residues 59 to 914 (MVSDAPSLDE…TNSSSIEKTN (856 aa)) lie on the Extracellular side of the membrane. The transglycosylase stretch occupies residues 77 to 246 (STIYDKNGKE…TAYNPVKNPD (170 aa)). E115 serves as the catalytic Proton donor; for transglycosylase activity. The tract at residues 329 to 662 (TKAQDKLDEL…PDSVVEATVE (334 aa)) is transpeptidase. Catalysis depends on S390, which acts as the Acyl-ester intermediate; for transpeptidase activity. In terms of domain architecture, Fibronectin type-III spans 708–795 (KLSGLNVKYD…SYEVPKAEDD (88 aa)). The disordered stretch occupies residues 773–914 (TAVSDDGKST…TNSSSIEKTN (142 aa)). Positions 798-828 (KKDQQQTDDEKQDDEKTQDDTQTDDSQKDDG) are enriched in basic and acidic residues. Residues 829 to 840 (QTDQDQTDDSTN) show a composition bias toward acidic residues. 2 stretches are compositionally biased toward low complexity: residues 848-892 (NTNT…GSDT) and 900-914 (SNKTQTNSSSIEKTN).

The protein in the N-terminal section; belongs to the glycosyltransferase 51 family. This sequence in the C-terminal section; belongs to the transpeptidase family. The product expressed from the translation of the ponA gene appears as two bands on a gel (1A and 1B), but the specific amino acid sequence of each protein is unknown. Post-translationally, the N-terminus is blocked.

The protein resides in the cell membrane. Its subcellular location is the forespore inner membrane. The enzyme catalyses [GlcNAc-(1-&gt;4)-Mur2Ac(oyl-L-Ala-gamma-D-Glu-L-Lys-D-Ala-D-Ala)](n)-di-trans,octa-cis-undecaprenyl diphosphate + beta-D-GlcNAc-(1-&gt;4)-Mur2Ac(oyl-L-Ala-gamma-D-Glu-L-Lys-D-Ala-D-Ala)-di-trans,octa-cis-undecaprenyl diphosphate = [GlcNAc-(1-&gt;4)-Mur2Ac(oyl-L-Ala-gamma-D-Glu-L-Lys-D-Ala-D-Ala)](n+1)-di-trans,octa-cis-undecaprenyl diphosphate + di-trans,octa-cis-undecaprenyl diphosphate + H(+). It catalyses the reaction Preferential cleavage: (Ac)2-L-Lys-D-Ala-|-D-Ala. Also transpeptidation of peptidyl-alanyl moieties that are N-acyl substituents of D-alanine.. It participates in cell wall biogenesis; peptidoglycan biosynthesis. Functionally, cell wall formation. Synthesis of cross-linked peptidoglycan from the lipid intermediates. The enzyme has a penicillin-insensitive transglycosylase N-terminal domain (formation of linear glycan strands) and a penicillin-sensitive transpeptidase C-terminal domain (cross-linking of the peptide subunits). Required for vegetative growth. Has a partially redundant function with PBP-2A (pbpA) during spore outgrowth. The chain is Penicillin-binding protein 1A/1B (ponA) from Bacillus subtilis (strain 168).